Reading from the N-terminus, the 184-residue chain is dCTP deaminase (184 aa).

Residues 107-112, 131-133, glutamine 152, tyrosine 166, and glutamine 176 each bind dCTP; these read KSTYAR and TLE. The Proton donor/acceptor role is filled by glutamate 133.

Belongs to the dCTP deaminase family. Homotrimer.

The enzyme catalyses dCTP + H2O + H(+) = dUTP + NH4(+). It participates in pyrimidine metabolism; dUMP biosynthesis; dUMP from dCTP (dUTP route): step 1/2. Its function is as follows. Catalyzes the deamination of dCTP to dUTP. This Rhodospirillum centenum (strain ATCC 51521 / SW) protein is dCTP deaminase.